Consider the following 292-residue polypeptide: Glutathione S-transferase L2, chloroplastic (292 aa).

Residues 1 to 56 (MSVGLKVSAFLHPTLALSSRDVSLSSSSSSLYLDRKILRPGSGRRWCKSRRTEPIL) constitute a chloroplast transit peptide. The GST N-terminal domain occupies 79 to 160 (GSTRLYISYT…YIDTNFEGPS (82 aa)). Glutathione contacts are provided by residues 89–90 (CP), 117–118 (NR), 131–132 (KV), and 144–145 (ES). The 157-residue stretch at 130–286 (NKVPALEHNN…ELVERYKRRV (157 aa)) folds into the GST C-terminal domain.

This sequence belongs to the GST superfamily. Lambda family.

The protein resides in the plastid. The protein localises to the chloroplast. The enzyme catalyses RX + glutathione = an S-substituted glutathione + a halide anion + H(+). In terms of biological role, catalyzes the glutathione-dependent reduction of S-glutathionylquercetin to quercetin. In vitro, possesses glutathione-dependent thiol transferase activity toward 2-hydroxyethyl disulfide (HED). The chain is Glutathione S-transferase L2, chloroplastic (GSTL2) from Arabidopsis thaliana (Mouse-ear cress).